Consider the following 100-residue polypeptide: Urease subunit gamma (100 aa).

It belongs to the urease gamma subunit family. In terms of assembly, heterotrimer of UreA (gamma), UreB (beta) and UreC (alpha) subunits. Three heterotrimers associate to form the active enzyme.

The protein resides in the cytoplasm. It catalyses the reaction urea + 2 H2O + H(+) = hydrogencarbonate + 2 NH4(+). It participates in nitrogen metabolism; urea degradation; CO(2) and NH(3) from urea (urease route): step 1/1. The chain is Urease subunit gamma from Cupriavidus metallidurans (strain ATCC 43123 / DSM 2839 / NBRC 102507 / CH34) (Ralstonia metallidurans).